The sequence spans 238 residues: MIAFIVLLSLAAVLQQSSGTVDFASESSNKKDYRKEIVDKHNDLRRSVKPTARNMLQMKWNSRAAQNAKRWANRCTFAHSPPYTRTVGKLRCGENIFMSSQPFAWSGVVQAWYDEVKKFVYGIGAKPPSSVIGHYTQVVWYKSHLLGCASAKCSSTKYLYVCQYCPAGNIIGSIATPYKSGPPCGDCPSACDNGLCTNPCKHNDDLSNCKPLAKKSKCQTEWIKSKCPATCFCRTEII.

The signal sequence occupies residues 1–19 (MIAFIVLLSLAAVLQQSSG). Positions 20–28 (TVDFASESS) are excised as a propeptide. The region spanning 38–164 (VDKHNDLRRS…STKYLYVCQY (127 aa)) is the SCP domain. Disulfide bonds link Cys-75–Cys-153, Cys-92–Cys-165, Cys-148–Cys-162, Cys-184–Cys-191, Cys-187–Cys-196, Cys-200–Cys-233, Cys-209–Cys-227, and Cys-218–Cys-231. The region spanning 200-233 (CKHNDDLSNCKPLAKKSKCQTEWIKSKCPATCFC) is the ShKT domain.

This sequence belongs to the CRISP family. In terms of tissue distribution, expressed by the venom gland.

The protein resides in the secreted. Blocks olfactory (CNGA2) and retinal (CNGA1) CNG channel currents. Does not affect neither depolarization- nor caffeine-induced contraction of smooth muscle. In Oxyuranus microlepidotus (Inland taipan), this protein is Cysteine-rich venom protein pseudechetoxin-like.